The chain runs to 311 residues: Ribosomal RNA small subunit methyltransferase H (311 aa).

S-adenosyl-L-methionine-binding positions include 32-34 (AGH), aspartate 52, phenylalanine 79, aspartate 100, and glutamine 107.

The protein belongs to the methyltransferase superfamily. RsmH family.

The protein localises to the cytoplasm. It catalyses the reaction cytidine(1402) in 16S rRNA + S-adenosyl-L-methionine = N(4)-methylcytidine(1402) in 16S rRNA + S-adenosyl-L-homocysteine + H(+). Specifically methylates the N4 position of cytidine in position 1402 (C1402) of 16S rRNA. The chain is Ribosomal RNA small subunit methyltransferase H from Staphylococcus haemolyticus (strain JCSC1435).